The following is a 201-amino-acid chain: Large ribosomal subunit protein bL25 (201 aa).

This sequence belongs to the bacterial ribosomal protein bL25 family. CTC subfamily. Part of the 50S ribosomal subunit; part of the 5S rRNA/L5/L18/L25 subcomplex. Contacts the 5S rRNA. Binds to the 5S rRNA independently of L5 and L18.

Its function is as follows. This is one of the proteins that binds to the 5S RNA in the ribosome where it forms part of the central protuberance. The chain is Large ribosomal subunit protein bL25 from Burkholderia multivorans (strain ATCC 17616 / 249).